Here is a 1170-residue protein sequence, read N- to C-terminus: NPC intracellular sterol transporter 1-related protein 1 (1170 aa).

The first 19 residues, 1 to 19 (MNVLWIIALVGQLMRLVQG), serve as a signal peptide directing secretion. 8 disulfide bridges follow: Cys23/Cys75, Cys29/Cys41, Cys64/Cys110, Cys76/Cys114, Cys98/Cys230, Cys101/Cys156, Cys223/Cys235, and Cys232/Cys239. Asn123, Asn145, and Asn178 each carry an N-linked (GlcNAc...) asparagine glycan. A helical transmembrane segment spans residues 260-280 (LSVLIFYTICALFAFMWYYLC). Asn314 carries N-linked (GlcNAc...) asparagine glycosylation. The chain crosses the membrane as a helical span at residues 341–361 (ILITTVFSIFVFSFIIFQYAT). N-linked (GlcNAc...) asparagine glycosylation is present at Asn401. Disulfide bonds link Cys438/Cys447 and Cys473/Cys480. N-linked (GlcNAc...) asparagine glycosylation occurs at Asn513. 6 helical membrane-spanning segments follow: residues 556–576 (NDIS…TWAL), 585–605 (LLLG…AAGF), 616–636 (IIAE…IFLI), 667–687 (ILMS…VTMP), 698–718 (VSVI…LSLY), and 752–772 (IIII…EIQF). Residues 557 to 717 (DISTVAISYL…LTAYVSILSL (161 aa)) enclose the SSD domain. Intrachain disulfides connect Cys822/Cys828, Cys868/Cys925, Cys869/Cys891, and Cys879/Cys888. N-linked (GlcNAc...) asparagine glycans are attached at residues Asn900 and Asn940. 5 consecutive transmembrane segments (helical) span residues 1000–1020 (LTLK…SVFL), 1027–1047 (FLLA…MALL), 1054–1074 (VSLV…VHIV), 1099–1119 (IGES…CVLA), and 1133–1153 (MWFT…PALL).

The protein belongs to the patched family.

The protein resides in the vacuole membrane. Functionally, involved in sphingolipid trafficking. May recycle sphingolipids between cellular membranous compartments. The chain is NPC intracellular sterol transporter 1-related protein 1 from Saccharomyces cerevisiae (strain ATCC 204508 / S288c) (Baker's yeast).